Reading from the N-terminus, the 296-residue chain is Homoserine kinase (296 aa).

84–94 (PLARGLGSSSS) is an ATP binding site.

It belongs to the GHMP kinase family. Homoserine kinase subfamily.

It localises to the cytoplasm. The catalysed reaction is L-homoserine + ATP = O-phospho-L-homoserine + ADP + H(+). It functions in the pathway amino-acid biosynthesis; L-threonine biosynthesis; L-threonine from L-aspartate: step 4/5. Its function is as follows. Catalyzes the ATP-dependent phosphorylation of L-homoserine to L-homoserine phosphate. The sequence is that of Homoserine kinase (thrB) from Lactococcus lactis subsp. cremoris (Streptococcus cremoris).